A 494-amino-acid polypeptide reads, in one-letter code: MKMPAKTGKEYMERLKQAKSSVYIHGEKVEDVTVHPAFRNVVRSMAALYDRQYEKPEKMLYRSPTTGQPVGMTFIQPTTIDELIARREATQEWARMSAGMMGRSPDYLNAEVMAMGIANDLFAEDDPMFAENAKNYYEYAREHDISLTHTLIHPQMNRAKALHEQNDADVPLHLVERRKDGIIVSGIRLLATQGGITDEILVFPSTVKKATSGEDPYALAFAIPNNTPGVKFICREAFDYGRSAWDHPLASRFEEGDAIVSFENVFVPWERVFVCGNSSICNRTFRETNAVVHMSHQVVAKNIVKTEFLLGVTLCLIEAIGIGEFQHVKDKGAEIMLVLETMKSHLYRAEHNAKRDRWGTMTPDFAALDAARNWYPRIYPRLAEIIRILGASGLMAIPTEADFQHEEIGDIVRRAMQGATVDGYERVQLFRLAWDLTMSAFGARQTHYEYYFFGDPVRMGMAYFDGYEKEPYKQFVREFLRGAKSVFIPADNKH.

Substrate contacts are provided by residues 103 to 107 (RSPDY) and His149. Residues 149–151 (HTL), 155–158 (QMNR), and Thr192 contribute to the FAD site. 205–206 (ST) contributes to the substrate binding site. 455–458 (DPVR) contacts FAD.

Belongs to the FADH(2)-utilizing monooxygenase family. In terms of assembly, 4-HPA 3-monooxygenase consists of a reductase component HpaI and an oxygenase component HpaH.

It catalyses the reaction 4-hydroxyphenylacetate + FADH2 + O2 = 3,4-dihydroxyphenylacetate + FAD + H2O + H(+). It participates in aromatic compound metabolism; 4-hydroxyphenylacetate degradation; pyruvate and succinate semialdehyde from 4-hydroxyphenylacetate: step 1/7. Utilizes FADH(2) supplied by HpaI, to catalyze the hydroxylation of 4-hydroxyphenylacetic acid, leading to the production of 3,4-dihydroxyphenylacetic acid (DHPA). The sequence is that of 4-hydroxyphenylacetate 3-monooxygenase oxygenase component (hpaH) from Geobacillus sp. (strain PA-9).